The following is a 339-amino-acid chain: Methionine import ATP-binding protein MetN 2 (339 aa).

The ABC transporter domain maps to 2–241 (ISFNNVSKLY…PKTKTTQNFV (240 aa)). 38-45 (GFSGAGKS) is a binding site for ATP.

It belongs to the ABC transporter superfamily. Methionine importer (TC 3.A.1.24) family. The complex is composed of two ATP-binding proteins (MetN), two transmembrane proteins (MetI) and a solute-binding protein (MetQ).

The protein resides in the cell membrane. The enzyme catalyses L-methionine(out) + ATP + H2O = L-methionine(in) + ADP + phosphate + H(+). It catalyses the reaction D-methionine(out) + ATP + H2O = D-methionine(in) + ADP + phosphate + H(+). Part of the ABC transporter complex MetNIQ involved in methionine import. Responsible for energy coupling to the transport system. The protein is Methionine import ATP-binding protein MetN 2 of Bacillus cereus (strain ATCC 14579 / DSM 31 / CCUG 7414 / JCM 2152 / NBRC 15305 / NCIMB 9373 / NCTC 2599 / NRRL B-3711).